The primary structure comprises 782 residues: Transcription factor Sp4 (782 aa).

3 disordered regions span residues 1–48 (MSDQ…PLAL), 107–148 (PPAS…TPNQ), and 275–385 (GGGT…QNAQ). S44 carries the phosphoserine modification. Polar residues predominate over residues 107-119 (PPASKENNVSQPA). 2 stretches are compositionally biased toward low complexity: residues 120 to 146 (SSSSSSSSSNNGSSSPTKTKSGNPSTP) and 281 to 342 (VGQP…SADT). Positions 344–354 (QYASTSASSSE) are enriched in polar residues. Low complexity predominate over residues 364-378 (AATESEAQSSSQLQS). The 9aaTAD; inactive motif lies at 465–473 (ISWQTVQVQ). 3 C2H2-type zinc fingers span residues 645 to 669 (HVCHIEGCGKVYGKTSHLRAHLRWH), 675 to 699 (FICNWMFCGKRFTRSDELQRHRRTH), and 705 to 727 (FECPECSKRFMRSDHLSKHVKTH).

The protein belongs to the Sp1 C2H2-type zinc-finger protein family. As to expression, expressed in many tissues.

It is found in the nucleus. Its function is as follows. Binds to GT and GC boxes promoters elements. Probable transcriptional activator. Required for normal male reproductive behavior. The protein is Transcription factor Sp4 (Sp4) of Mus musculus (Mouse).